The sequence spans 204 residues: Casparian strip membrane protein 2 (204 aa).

Residues M1–R41 are Cytoplasmic-facing. The helical transmembrane segment at G42 to A62 threads the bilayer. Residues G63–Q92 lie on the Extracellular side of the membrane. The helical transmembrane segment at F93–V113 threads the bilayer. The Cytoplasmic segment spans residues V114 to R125. A helical membrane pass occupies residues L126–A146. Residues A147 to G178 lie on the Extracellular side of the membrane. Residues A179–V199 form a helical membrane-spanning segment. The Cytoplasmic segment spans residues A200–H204.

It belongs to the Casparian strip membrane proteins (CASP) family. Homodimer and heterodimers.

Its subcellular location is the cell membrane. Regulates membrane-cell wall junctions and localized cell wall deposition. Required for establishment of the Casparian strip membrane domain (CSD) and the subsequent formation of Casparian strips, a cell wall modification of the root endodermis that determines an apoplastic barrier between the intraorganismal apoplasm and the extraorganismal apoplasm and prevents lateral diffusion. This chain is Casparian strip membrane protein 2, found in Raphanus sativus (Radish).